The chain runs to 465 residues: Probable Xaa-Pro aminopeptidase PEPP (465 aa).

Residues D259, D270, E395, and E435 each contribute to the Mn(2+) site.

It belongs to the peptidase M24B family. Mn(2+) serves as cofactor.

The enzyme catalyses Release of any N-terminal amino acid, including proline, that is linked to proline, even from a dipeptide or tripeptide.. Functionally, catalyzes the removal of a penultimate prolyl residue from the N-termini of peptides. In Pyricularia oryzae (strain 70-15 / ATCC MYA-4617 / FGSC 8958) (Rice blast fungus), this protein is Probable Xaa-Pro aminopeptidase PEPP (PEPP).